A 279-amino-acid polypeptide reads, in one-letter code: Methyltransferase ausD (279 aa).

Residues 124 to 125 and 152 to 153 each bind S-adenosyl-L-methionine; these read DI and DV.

Belongs to the class I-like SAM-binding methyltransferase superfamily. In terms of assembly, homodimer.

The protein operates within secondary metabolite biosynthesis; terpenoid biosynthesis. Methyltransferase; part of the gene cluster A that mediates the biosynthesis of the fungal meroterpenoid acetoxydehydroaustin. The first step of the pathway is the synthesis of 3,5-dimethylorsellinic acid by the polyketide synthase ausA. 3,5-dimethylorsellinic acid is then prenylated by the polyprenyl transferase ausN. Further epoxidation by the FAD-dependent monooxygenase ausM and cyclization by the probable terpene cyclase ausL lead to the formation of protoaustinoid A. Protoaustinoid A is then oxidized to spiro-lactone preaustinoid A3 by the combined action of the FAD-binding monooxygenases ausB and ausC, and the dioxygenase ausE. Acid-catalyzed keto-rearrangement and ring contraction of the tetraketide portion of preaustinoid A3 by ausJ lead to the formation of preaustinoid A4. The aldo-keto reductase ausK, with the help of ausH, is involved in the next step by transforming preaustinoid A4 into isoaustinone which is in turn hydroxylated by the P450 monooxygenase ausI to form austinolide. The cytochrome P450 monooxygenase ausG then modifies austinolide to austinol. Austinol is further acetylated to austin by the O-acetyltransferase ausP, which spontaneously changes to dehydroaustin. The cytochrome P450 monooxygenase then converts dehydroaustin is into 7-dehydrodehydroaustin. The hydroxylation catalyzed by ausR permits the second O-acetyltransferase ausQ to add an additional acetyl group to the molecule, leading to the formation of acetoxydehydroaustin. Due to genetic rearrangements of the clusters and the subsequent loss of some enzymes, the end product of the Penicillium brasilianum austinoid biosynthesis clusters is acetoxydehydroaustin. In Penicillium brasilianum, this protein is Methyltransferase ausD.